A 580-amino-acid polypeptide reads, in one-letter code: Formate--tetrahydrofolate ligase (580 aa).

65 to 72 is an ATP binding site; sequence TPHGEGKT.

The protein belongs to the formate--tetrahydrofolate ligase family.

It catalyses the reaction (6S)-5,6,7,8-tetrahydrofolate + formate + ATP = (6R)-10-formyltetrahydrofolate + ADP + phosphate. It functions in the pathway one-carbon metabolism; tetrahydrofolate interconversion. In Shewanella baltica (strain OS223), this protein is Formate--tetrahydrofolate ligase.